The chain runs to 248 residues: tRNA pseudouridine synthase A (248 aa).

Asp-53 functions as the Nucleophile in the catalytic mechanism. Tyr-116 lines the substrate pocket.

This sequence belongs to the tRNA pseudouridine synthase TruA family. As to quaternary structure, homodimer.

The enzyme catalyses uridine(38/39/40) in tRNA = pseudouridine(38/39/40) in tRNA. Formation of pseudouridine at positions 38, 39 and 40 in the anticodon stem and loop of transfer RNAs. This is tRNA pseudouridine synthase A from Helicobacter hepaticus (strain ATCC 51449 / 3B1).